The chain runs to 573 residues: Sterol esterase 1 (573 aa).

The Cytoplasmic portion of the chain corresponds to 1–12 (MGVSAVLKRARN). An intramembrane segment occupies 13 to 33 (LLATFIVCCFMAVVLVLALAH). Residues 34 to 573 (HFINEHRDTR…TELEMVAEKA (540 aa)) are Cytoplasmic-facing. S315 acts as the Nucleophile in catalysis. Residues D489 and H520 each act as charge relay system in the active site.

The protein belongs to the AB hydrolase superfamily. Post-translationally, not N-glycosylated.

It localises to the lipid droplet. It is found in the membrane. It carries out the reaction a sterol ester + H2O = a sterol + a fatty acid + H(+). In terms of biological role, mediates the hydrolysis of steryl esters, thereby playing a central role in lipid metabolism. Under heme-deficient conditions, it constitutes the major steryl ester hydrolase, suggesting that it plays a central role in mobilization of steryl esters under anaerobic conditions. This Saccharomyces cerevisiae (strain ATCC 204508 / S288c) (Baker's yeast) protein is Sterol esterase 1 (YEH1).